Here is a 338-residue protein sequence, read N- to C-terminus: Phosphatidylglycerol--prolipoprotein diacylglyceryl transferase (338 aa).

Transmembrane regions (helical) follow at residues 24-44, 67-87, 115-135, and 141-161; these read WYGL…SYQV, LFIW…TLVY, GFQG…VILW, and FKFA…YTFG. Arginine 162 is a binding site for a 1,2-diacyl-sn-glycero-3-phospho-(1'-sn-glycerol). 3 consecutive transmembrane segments (helical) span residues 224–244, 252–272, and 304–324; these read PSQL…LWLL, GFLV…IEYF, and GQIL…ILYL.

This sequence belongs to the Lgt family.

Its subcellular location is the cell inner membrane. The catalysed reaction is L-cysteinyl-[prolipoprotein] + a 1,2-diacyl-sn-glycero-3-phospho-(1'-sn-glycerol) = an S-1,2-diacyl-sn-glyceryl-L-cysteinyl-[prolipoprotein] + sn-glycerol 1-phosphate + H(+). Its pathway is protein modification; lipoprotein biosynthesis (diacylglyceryl transfer). Its function is as follows. Catalyzes the transfer of the diacylglyceryl group from phosphatidylglycerol to the sulfhydryl group of the N-terminal cysteine of a prolipoprotein, the first step in the formation of mature lipoproteins. The sequence is that of Phosphatidylglycerol--prolipoprotein diacylglyceryl transferase from Treponema denticola (strain ATCC 35405 / DSM 14222 / CIP 103919 / JCM 8153 / KCTC 15104).